The chain runs to 1010 residues: Phosphatidylserine decarboxylase proenzyme 2 (1010 aa).

C2 domains follow at residues 1 to 114 (MSQA…SSWE) and 247 to 370 (DFES…DKPC). Residues Asp-342, Ser-345, and Asp-348 each coordinate Ca(2+). The 36-residue stretch at 458–493 (LRRQLWMHLLQGNDTQMKGTLDLIELNYFVDCLGSN) folds into the EF-hand domain. Catalysis depends on charge relay system; for autoendoproteolytic cleavage activity residues Asp-734, His-793, and Ser-880. Ser-880 serves as the catalytic Schiff-base intermediate with substrate; via pyruvic acid; for decarboxylase activity. Ser-880 carries the pyruvic acid (Ser); by autocatalysis modification.

The protein belongs to the phosphatidylserine decarboxylase family. PSD-B subfamily. Eukaryotic type II sub-subfamily. As to quaternary structure, heterodimer of a large membrane-associated beta subunit and a small pyruvoyl-containing alpha subunit. Interacts with pstB2. This interaction may be a means to structurally tether the donor membrane (ER) harboring PstB2 to acceptor membranes (Golgi/endosomes) harboring PSD2 during PtdSer transport to the site of PtdEtn synthesis. Pyruvate serves as cofactor. Requires Ca(2+) as cofactor. In terms of processing, is synthesized initially as an inactive proenzyme. Formation of the active enzyme involves a self-maturation process in which the active site pyruvoyl group is generated from an internal serine residue via an autocatalytic post-translational modification. Two non-identical subunits are generated from the proenzyme in this reaction, and the pyruvate is formed at the N-terminus of the alpha chain, which is derived from the carboxyl end of the proenzyme. The autoendoproteolytic cleavage occurs by a canonical serine protease mechanism, in which the side chain hydroxyl group of the serine supplies its oxygen atom to form the C-terminus of the beta chain, while the remainder of the serine residue undergoes an oxidative deamination to produce ammonia and the pyruvoyl prosthetic group on the alpha chain. During this reaction, the Ser that is part of the protease active site of the proenzyme becomes the pyruvoyl prosthetic group, which constitutes an essential element of the active site of the mature decarboxylase.

It is found in the golgi apparatus membrane. Its subcellular location is the endosome membrane. It catalyses the reaction a 1,2-diacyl-sn-glycero-3-phospho-L-serine + H(+) = a 1,2-diacyl-sn-glycero-3-phosphoethanolamine + CO2. Its pathway is phospholipid metabolism; phosphatidylethanolamine biosynthesis; phosphatidylethanolamine from CDP-diacylglycerol: step 2/2. Functionally, catalyzes the formation of phosphatidylethanolamine (PtdEtn) from phosphatidylserine (PtdSer). Plays a central role in phospholipid metabolism and in the interorganelle trafficking of phosphatidylserine. The polypeptide is Phosphatidylserine decarboxylase proenzyme 2 (Komagataella phaffii (strain GS115 / ATCC 20864) (Yeast)).